The chain runs to 1499 residues: MPKYVEGVELTQEGMHAIFARMGYGDITSGSIYNGVPTIDTGALNRQGFMPVLTGVGPHRDSGHWIMLIKGPGNQYYLFDPLGKTSGEGYQNILAAQLPMGSTLSVIPNGSGLNMGLCGYWVASAGLRAHQALNQHNPPTLLNVGQTITNEMRNELDHDGYRKITGWLRAVADEFPEGDPQLDGKALRENTEKDLKIEIPTLVLPGKDTSPKEMSVKPTAPQDKSVPVWNGFSLYTDDTVKAAAQYAYDNYLGKPYTGSVESAPANFGGRMVYRQHHGLSHTLRTMAYAELIVEEARKAKLRGETLGKFKDGRTIADVTPQELKKIMIAQAFFVAGRDDEASDAKNYQKYHEQSRDAFLKYVKDNESTLIPDVFKDQEDVNFYARVIEDKSHDWESTPAHVLINQGHMVDLVRVKQPPESFLQRYFSSMQRWIGSQATEAVFGIQRQFFHATYEVVAGFDSDNKEPHLVVSGLGRYVIGEDGQPIREAPKKGQKEGDLKVFPQTYKLKENERLMRVDEFLKLPEIQNTFPGSGKHLQGGMPGMNEMDYWNRLNSLNRARCENDVDFCLKQLQTAHDKAKIEPIKQAFQSSKGKERRQPNVDEIAAARIIQQILANPDCIHDDHVLINGQKLEQQFFRDLLAKCEMAVVGSLLNDTDIGNIDTLMRHEKDTEFHSTNPEAVPVKIGEYWINDQRINNSSGNITQKKHDLIFLMQNDAWYFSRVNAIAQNRDKGSTFKEVLITTLMTPLTSKALVDTSQAKPPTRLFRGLNLSEEFTKGLIDQANAMIANTTERLFTDHSPEAFKQIKLNDLSKMSGRTNASTTTEIKLVKETWDSNVIFEMLDPDGLLHSKQVGRHGEGTESEFSVYLPEDVALVPVKVTLDGKTQKGENRYVFTFVAVKSPDFTPRHESGYAVEPFLRMQAAKLAEVKSSIEKAQRAPDLETIFNLQNEVEAVQYSHLSTGYKNFLKNTVGPVLENSLSGLMESDTDTLSKALAAFPSDTQWSAFNFEEARQAKRQMDAIKQMVGNKVVLDALTQCQDALEKQNIAGALDALKKIPSEKEMGTIRRELREQIQSARQELESLQRAVVTPVVTDEKKVRERYDALIENTSKKITELETGKLPNLDAVKKGISNLSNLKQEVTVLRNEKIRMHVGTDKVDFSDVEKLEQQIQVIDTKLADAYLLEVTKQISALDNTKPKNQTELKTKIAAFLDRTTDIEMLRNERIKKHGSSKDPLDLSDLDKLSGSLQRINQSLVSDLITTIRVSINQMEAKTFHEQEKEIQQNFELLAKLEKTLDKSKTSEKLREDIPKLNDLLVAKQKAYPQMVQMQLKSEVFVTQLREVCQANHDDLDKTRNARLRELDRLDREAGITRMVGNLIWGLTNKVGLTTDERLDIRTKQQSLARFKNELFNDKIDTDQLISNLARKRPSELQEGLGISTDNAMELHLLLTELAGKTTSPDELEERMKAIDDISTKIGREPEHLKFVMVEEDESNKKTIGF.

The interval 1–193 is deubiquitinase; sequence MPKYVEGVEL…GKALRENTEK (193 aa). Residues histidine 64 and aspartate 80 each act as for deubiquitinase activity in the active site. Cysteine 118 functions as the Nucleophile; for deubiquitinase activity in the catalytic mechanism. The mono-ADP-ribosyltransferase stretch occupies residues 760 to 1000; the sequence is PPTRLFRGLN…KALAAFPSDT (241 aa). Position 766–772 (766–772) interacts with NAD(+); sequence RGLNLSE. Glutamate 860 is modified (5-glutamyl glutamate). Residue glutamate 862 participates in NAD(+) binding. A coiled-coil region spans residues 1059–1181; that stretch reads KEMGTIRREL…IDTKLADAYL (123 aa).

The protein belongs to the SidE family. In terms of assembly, interacts with IcmS. Post-translationally, is able to ubiquitinate itself, but this modification is not required to ubiquitinate Rab33b. In terms of processing, glutamylated at Glu-860 by SidJ; glutamylation inhibits SdeA activity to catalyze the production of ADP-ribosylated ubiquitin.

The protein resides in the secreted. It is found in the host cell. The enzyme catalyses L-arginyl-[protein] + NAD(+) = N(omega)-(ADP-D-ribosyl)-L-arginyl-[protein] + nicotinamide + H(+). Its activity is regulated as follows. Ubiquitination catalyzed by SdeA is insensitive to the cysteine alkylation agent maleimide, suggesting that a cysteine conjugation of ubiquitin does not form during the reaction. Secreted effector that interferes with the host cell ubiquitin pathway and is required for intracellular bacterial replication. Catalyzes the ubiquitination of several mammalian Rab proteins (Rab33b, Rab1, Rab6a and Rab30) during L.pneumophila infection, without engaging the standard cellular enzyme cascade (E1 and E2). Transfers an ADP-ribose moiety from NAD to the 'Arg-42' residue of ubiquitin in a reaction that releases nicotinamide. The modified ubiquitin is subsequently transferred to serine residues of the substrate protein via a phosphoribose linker that results in the release of AMP. Cannot ubiquitinate the endosomal Rab5 or the cytoskeletal small GTPase Rac1. Also acts as a deubiquitinase (DUB), catalyzing the cleavage of three of the most abundant polyubiquitin chains ('Lys-11', 'Lys-48' and 'Lys-63') with a distinct preference for 'Lys-63' linkages; is thus able to efficiently remove 'Lys-63'-linked polyubiquitin chains from the phagosomal surface. Is also able to remove NEDD8 from neddylated proteins, but is unable to recognize SUMO. The DUB activity of SdeA is important for regulating the dynamics of ubiquitin association with the bacterial phagosome, but is dispensable for its role in intracellular bacterial replication. The chain is Ubiquitinating/deubiquitinating enzyme SdeA from Legionella pneumophila subsp. pneumophila (strain Philadelphia 1 / ATCC 33152 / DSM 7513).